Consider the following 305-residue polypeptide: tRNA dimethylallyltransferase (305 aa).

Residue 8–15 (GPTAVGKT) participates in ATP binding. 10–15 (TAVGKT) serves as a coordination point for substrate. Residues 33-36 (DSRQ) are interaction with substrate tRNA.

This sequence belongs to the IPP transferase family. As to quaternary structure, monomer. It depends on Mg(2+) as a cofactor.

It carries out the reaction adenosine(37) in tRNA + dimethylallyl diphosphate = N(6)-dimethylallyladenosine(37) in tRNA + diphosphate. Catalyzes the transfer of a dimethylallyl group onto the adenine at position 37 in tRNAs that read codons beginning with uridine, leading to the formation of N6-(dimethylallyl)adenosine (i(6)A). This is tRNA dimethylallyltransferase from Thermotoga maritima (strain ATCC 43589 / DSM 3109 / JCM 10099 / NBRC 100826 / MSB8).